Consider the following 227-residue polypeptide: 2-C-methyl-D-erythritol 4-phosphate cytidylyltransferase (227 aa).

It belongs to the IspD/TarI cytidylyltransferase family. IspD subfamily.

The enzyme catalyses 2-C-methyl-D-erythritol 4-phosphate + CTP + H(+) = 4-CDP-2-C-methyl-D-erythritol + diphosphate. It participates in isoprenoid biosynthesis; isopentenyl diphosphate biosynthesis via DXP pathway; isopentenyl diphosphate from 1-deoxy-D-xylulose 5-phosphate: step 2/6. Functionally, catalyzes the formation of 4-diphosphocytidyl-2-C-methyl-D-erythritol from CTP and 2-C-methyl-D-erythritol 4-phosphate (MEP). This is 2-C-methyl-D-erythritol 4-phosphate cytidylyltransferase from Dehalococcoides mccartyi (strain CBDB1).